A 398-amino-acid chain; its full sequence is Cyclin-dependent kinase D-1 (398 aa).

The 281-residue stretch at 11–291 (YLKREVLGQG…IQQALKHRYF (281 aa)) folds into the Protein kinase domain. ATP is bound by residues 17-25 (LGQGTYGVV) and K40. Y22 is subject to Phosphotyrosine. The active-site Proton acceptor is the D133. Residue S160 is modified to Phosphoserine. At T166 the chain carries Phosphothreonine. Residues 296–318 (SPTDPLKLPRPVSKQDAKSSDSK) are disordered. The span at 308–318 (SKQDAKSSDSK) shows a compositional bias: basic and acidic residues.

It belongs to the protein kinase superfamily. CMGC Ser/Thr protein kinase family. CDC2/CDKX subfamily. Autophosphorylated. As to expression, expressed at low levels in suspension cell culture, but not in plant organs.

It localises to the nucleus. It catalyses the reaction L-seryl-[protein] + ATP = O-phospho-L-seryl-[protein] + ADP + H(+). The catalysed reaction is L-threonyl-[protein] + ATP = O-phospho-L-threonyl-[protein] + ADP + H(+). The enzyme catalyses [DNA-directed RNA polymerase] + ATP = phospho-[DNA-directed RNA polymerase] + ADP + H(+). This chain is Cyclin-dependent kinase D-1 (CDKD-1), found in Arabidopsis thaliana (Mouse-ear cress).